Consider the following 7603-residue polypeptide: Cysteine repeat modular protein B (7603 aa).

Asparagine 172 is a glycosylation site (N-linked (GlcNAc...) asparagine). Residues 223–243 (LVGFFLVPVFVVFFVLSSDAT) form a helical membrane-spanning segment. Disordered stretches follow at residues 248–275 (GVGVLSARADREEKSSVSSSSRASSSPG) and 291–323 (RDTKAAGYTGRSSRRSARARRRRAADGGEGKGF). Residues 263 to 275 (SVSSSSRASSSPG) show a composition bias toward low complexity. Residues 302–313 (SSRRSARARRRR) show a composition bias toward basic residues. 6 N-linked (GlcNAc...) asparagine glycosylation sites follow: asparagine 329, asparagine 589, asparagine 848, asparagine 1128, asparagine 1183, and asparagine 1402. The disordered stretch occupies residues 1554 to 1574 (VLRSRSGPSHPSSVSQPSPSF). Positions 1557–1573 (SRSGPSHPSSVSQPSPS) are enriched in low complexity. Asparagine 1622, asparagine 2578, asparagine 2664, asparagine 3094, and asparagine 3126 each carry an N-linked (GlcNAc...) asparagine glycan. Residues 3316–3445 (SNAVPEADEN…SDLTTSQPED (130 aa)) form a disordered region. The span at 3321–3340 (EADENQVESAEPEQNAEGET) shows a compositional bias: acidic residues. Residues 3342 to 3360 (EQGAEEAGGNAAEPGAESG) are compositionally biased toward low complexity. Residues asparagine 3546, asparagine 4367, asparagine 4823, asparagine 4901, asparagine 5186, asparagine 5546, and asparagine 5666 are each glycosylated (N-linked (GlcNAc...) asparagine). The interval 5758–5799 (LAESRSDDGTVGDDVDLDDNALSGTTNSGWTTSSSNSERVRK) is disordered. A compositionally biased stretch (acidic residues) spans 5767-5776 (TVGDDVDLDD). A compositionally biased stretch (low complexity) spans 5780–5794 (SGTTNSGWTTSSSNS). N-linked (GlcNAc...) asparagine glycans are attached at residues asparagine 5806, asparagine 5876, asparagine 5998, asparagine 6055, and asparagine 6369. Positions 6043 to 6115 (GEADHTPADG…EASEAESVSA (73 aa)) are disordered. Positions 6051 to 6060 (DGSSNSSEDS) are enriched in polar residues. Basic and acidic residues predominate over residues 6391–6405 (EFTDTGPAPDDHTDE). The interval 6391 to 6436 (EFTDTGPAPDDHTDEGGANLDSTGGSGEPSSSAPVDPSGENEGQLL) is disordered. Positions 6410–6423 (LDSTGGSGEPSSSA) are enriched in polar residues. An N-linked (GlcNAc...) asparagine glycan is attached at asparagine 6453. Helical transmembrane passes span 6520 to 6540 (IFILMRLVVCGIIWIITALTI), 6552 to 6572 (VLIRIVMSHMFFLSVYGLMPA), 6578 to 6598 (LAGWASIYRLFFFEFYFALHP), 6627 to 6647 (IFVPFIDAVLLTIIGAICVAT), 6770 to 6790 (LILGGVGLLVWGVGSIAGFVA), 6831 to 6851 (CVALIITMYVHANASGAQEIF), 6888 to 6908 (GLMVNIIIGVIFQGSYYFEVF), and 6912 to 6932 (GAIPLAVAIFYYLYVLWSLFV). N-linked (GlcNAc...) asparagine glycosylation occurs at asparagine 7013. The helical transmembrane segment at 7017–7037 (FVAALSDSLSQLVIAWCQFTI) threads the bilayer. An N-linked (GlcNAc...) asparagine glycan is attached at asparagine 7061. Positions 7174-7242 (APQLRKENHA…RGLIESEIDD (69 aa)) form a coiled coil. The tract at residues 7379 to 7603 (AAPAAGLRSH…LKKPGSPKQE (225 aa)) is disordered. The segment covering 7408 to 7417 (LGTNLSTPSA) has biased composition (polar residues). An N-linked (GlcNAc...) asparagine glycan is attached at asparagine 7411. Composition is skewed to low complexity over residues 7474-7496 (PTPSRSPSGTTRTVGSVVRSVTP), 7509-7541 (SEAPLISPSASSLASPRSLSPLTERRGSQSSDL), and 7560-7582 (GEAAPAEAPSPSPRSSSPLAAQP).

As to quaternary structure, component of a complex, at least composed of cysteine repeat modular protein A (CRMPa), cysteine repeat modular protein B (CRMPb), micronemal protein 15 (MIC15) and thrombospondin type 1 domain-containing protein (TSP1).

It localises to the cell membrane. The protein resides in the endoplasmic reticulum. Its subcellular location is the golgi apparatus. Its function is as follows. Required for triggering rhoptry secretion. Plays a role in host cell invasion. The chain is Cysteine repeat modular protein B from Toxoplasma gondii.